A 192-amino-acid chain; its full sequence is Xanthine phosphoribosyltransferase (192 aa).

Xanthine contacts are provided by leucine 20 and asparagine 27. 128–132 (ANGDA) contacts 5-phospho-alpha-D-ribose 1-diphosphate. Lysine 156 contacts xanthine.

It belongs to the purine/pyrimidine phosphoribosyltransferase family. Xpt subfamily. Homodimer.

Its subcellular location is the cytoplasm. The catalysed reaction is XMP + diphosphate = xanthine + 5-phospho-alpha-D-ribose 1-diphosphate. It participates in purine metabolism; XMP biosynthesis via salvage pathway; XMP from xanthine: step 1/1. Its function is as follows. Converts the preformed base xanthine, a product of nucleic acid breakdown, to xanthosine 5'-monophosphate (XMP), so it can be reused for RNA or DNA synthesis. The chain is Xanthine phosphoribosyltransferase from Staphylococcus carnosus (strain TM300).